Consider the following 28-residue polypeptide: Expansin-B1 (28 aa).

In terms of domain architecture, Expansin-like CBD spans 11 to 28 (MLLSLQGPXSLRMVSESG).

This sequence belongs to the expansin family. Expansin B subfamily.

It localises to the secreted. The protein localises to the cell wall. It is found in the membrane. May cause loosening and extension of plant cell walls by disrupting non-covalent bonding between cellulose microfibrils and matrix glucans. In Pseudotsuga menziesii (Douglas-fir), this protein is Expansin-B1.